Consider the following 1850-residue polypeptide: Voltage-dependent L-type calcium channel subunit alpha-1S (1850 aa).

Positions 1-23 (MEPSSPQDEGLRKKQPKKPVPEI) are disordered. At 1–51 (MEPSSPQDEGLRKKQPKKPVPEILPRPPRALFCLTLQNPLRKACISVVEWK) the chain is on the cytoplasmic side. One copy of the I repeat lies at 38 to 337 (NPLRKACISV…LVLGVLSGEF (300 aa)). Residues 52 to 70 (PFETIILLTIFANCVALAV) form a helical membrane-spanning segment. The Extracellular portion of the chain corresponds to 71-85 (YLPMPEDDNNTLNLG). The chain crosses the membrane as a helical span at residues 86–106 (LEKLEYFFLIVFSIEAAMKII). The Cytoplasmic segment spans residues 107 to 115 (AYGFLFHQD). Residues 116 to 136 (AYLRSGWNVLDFIIVFLGVFT) form a helical membrane-spanning segment. The Extracellular segment spans residues 137-160 (AILEQVNIIQTNTAPMSSKGAGLD). A helical transmembrane segment spans residues 161–179 (VKALRAFRVLRPLRLVSGV). The Cytoplasmic segment spans residues 180 to 196 (PSLQVVLNSIFKAMLPL). Residues 197–218 (FHIALLVLFMVIIYAIIGLELF) traverse the membrane as a helical segment. Topologically, residues 219-279 (KGKMHKTCYF…HGITHFDNFG (61 aa)) are extracellular. Intrachain disulfides connect cysteine 226–cysteine 254 and cysteine 245–cysteine 261. An intramembrane region (pore-forming) is located at residues 280 to 301 (FSMLTVYQCISMEGWTDVLYWV). The Selectivity filter of repeat I motif lies at 290–293 (SMEG). A Ca(2+)-binding site is contributed by glutamate 292. Topologically, residues 302 to 309 (NDAIGNEW) are extracellular. A helical membrane pass occupies residues 310–330 (PWIYFVTLILLGSFFILNLVL). The Cytoplasmic portion of the chain corresponds to 331–432 (GVLSGEFTKE…WKCHDLVKSK (102 aa)). Residues 357–374 (QQLEEDLRGYMSWITQGE) are binding to the beta subunit. Phosphoserine occurs at positions 393 and 397. Residues 418–664 (NRVFRWKCHD…VFLAIAVDNL (247 aa)) form an II repeat. A helical membrane pass occupies residues 433–451 (VFYWLVILIVALNTLSIAS). Residues 452–462 (EHHNQPLWLTH) lie on the Extracellular side of the membrane. The chain crosses the membrane as a helical span at residues 463–483 (LQDVANRVLLALFTIEMLMKM). Topologically, residues 484 to 494 (YGLGLRQYFMS) are cytoplasmic. The helical transmembrane segment at 495 to 514 (IFNRFDCFVVCSGILEILLV) threads the bilayer. The Extracellular segment spans residues 515–523 (ESGAMTPLG). The chain crosses the membrane as a helical span at residues 524–542 (ISVLRCIRLLRLFKITKYW). Residues 543-561 (TSLSNLVASLLNSIRSIAS) lie on the Cytoplasmic side of the membrane. A helical membrane pass occupies residues 562–581 (LLLLLFLFMIIFALLGMQLF). The Extracellular segment spans residues 582–601 (GGRYDFEDTEVRRSNFDNFP). An intramembrane region (pore-forming) is located at residues 602-623 (QALISVFQVLTGEDWNSVMYNG). A Selectivity filter of repeat II motif is present at residues 612-615 (TGED). Residue glutamate 614 coordinates Ca(2+). Residues 624-633 (IMAYGGPSYP) are Extracellular-facing. The helical transmembrane segment at 634–653 (GVLVCIYFIILFVCGNYILL) threads the bilayer. Topologically, residues 654–799 (NVFLAIAVDN…VLCHRIVNAT (146 aa)) are cytoplasmic. Disordered regions lie at residues 673-717 (AQKA…IPTT) and 731-758 (EVKD…SPRP). At serine 687 the chain carries Phosphoserine; by PKA. Over residues 690–711 (LPDKSEEERSTMTKKLEQKPKG) the composition is skewed to basic and acidic residues. Residues 742 to 751 (PGDDEEDEPE) are compositionally biased toward acidic residues. An III repeat occupies 786-1068 (NKIRVLCHRI…IFVGFVIVTF (283 aa)). A helical transmembrane segment spans residues 800–818 (WFTNFILLFILLSSAALAA). Residues 819 to 830 (EDPIRADSMRNQ) are Extracellular-facing. A helical membrane pass occupies residues 831–850 (ILEYFDYVFTAVFTVEIVLK). Residues 851–866 (MTTYGAFLHKGSFCRN) lie on the Cytoplasmic side of the membrane. Residues 867 to 885 (YFNILDLLVVAVSLISMGL) form a helical membrane-spanning segment. The Extracellular portion of the chain corresponds to 886–892 (ESSAISV). A helical membrane pass occupies residues 893–911 (VKILRVLRVLRPLRAINRA). Over 912 to 930 (KGLKHVVQCVFVAIRTIGN) the chain is Cytoplasmic. The helical transmembrane segment at 931 to 950 (IVLVTTLLQFMFACIGVQLF) threads the bilayer. The Extracellular segment spans residues 951–1000 (KGKFYSCNDLSKMTEEECRGYYYIYKDGDPTQIELRPRQWIHNDFHFDNV). Cysteine 957 and cysteine 968 are oxidised to a cystine. The segment at 988-1077 (RQWIHNDFHF…FQEQGETEYK (90 aa)) is dihydropyridine binding. Residues 1001–1021 (LSAMMSLFTVSTFEGWPQLLY) constitute an intramembrane region (pore-forming). Residues 1012 to 1015 (TFEG) carry the Selectivity filter of repeat III motif. Glutamate 1014 contacts Ca(2+). At 1022–1038 (KAIDSNEEDTGPVYNNR) the chain is on the extracellular side. The helical transmembrane segment at 1039–1060 (VEMAIFFIIYIILIAFFMMNIF) threads the bilayer. The Cytoplasmic segment spans residues 1061–1118 (VGFVIVTFQEQGETEYKNCELDKNQRQCVQYALKARPLRCYIPKNPYQYQVWYVVTSS). Residues 1105-1384 (NPYQYQVWYV…LFVAVIMDNF (280 aa)) form an IV repeat. A helical transmembrane segment spans residues 1119–1140 (YFEYLMFALIMLNTICLGMQHY). The N-linked (GlcNAc...) asparagine glycan is linked to asparagine 1141. The Extracellular portion of the chain corresponds to 1141–1148 (NQSEQMNH). A helical membrane pass occupies residues 1149–1170 (ISDILNVAFTIIFTLEMILKLI). At 1171–1180 (AFKPRGYFGD) the chain is on the cytoplasmic side. Residues 1181-1200 (PWNVFDFLIVIGSIIDVILS) traverse the membrane as a helical segment. At 1201-1231 (EIDTLLASSGGLYCLGGGCGNVDPDESARIS) the chain is on the extracellular side. The helical transmembrane segment at 1232–1250 (SAFFRLFRVMRLIKLLSRA) threads the bilayer. Residues 1251-1268 (EGVRTLLWTFIKSFQALP) are Cytoplasmic-facing. Residues 1269 to 1289 (YVALLIVMLFFIYAVIGMQMF) form a helical membrane-spanning segment. The Extracellular segment spans residues 1290–1311 (GKIAMVDGTQINRNNNFQTFPQ). The segment at residues 1312–1330 (AVLLLFRCATGEAWQEILL) is an intramembrane region (pore-forming). Residues 1321–1324 (TGEA) carry the Selectivity filter of repeat IV motif. The Extracellular segment spans residues 1331-1356 (ACSYGKRCDPESDYAPGEEYACGTNF). The tract at residues 1337-1403 (RCDPESDYAP…LGPHHLDEFK (67 aa)) is dihydropyridine binding. The cysteines at positions 1338 and 1352 are disulfide-linked. The phenylalkylamine binding stretch occupies residues 1349-1391 (EYACGTNFAYYYFISFYMLCAFLIINLFVAVIMDNFDYLTRDW). A helical transmembrane segment spans residues 1357 to 1381 (AYYYFISFYMLCAFLIINLFVAVIM). The Cytoplasmic portion of the chain corresponds to 1382-1850 (DNFDYLTRDW…PKGGAMPREP (469 aa)). Positions 1522–1542 (KFYATFLIQEHFRKFMKRQEE) are interaction with calmodulin. Residue serine 1575 is modified to Phosphoserine; by PKA and CAMK2. At threonine 1579 the chain carries Phosphothreonine. Serine 1617 bears the Phosphoserine; by PKA mark. Positions 1697 to 1779 (PVTREGPFSQ…FEERVPRNSA (83 aa)) are disordered. The segment covering 1706-1716 (QPCSVSGVNSR) has biased composition (polar residues). 2 stretches are compositionally biased toward basic and acidic residues: residues 1717-1726 (SHVDKLERQM) and 1745-1756 (QEKHPVHEEGKG).

The protein belongs to the calcium channel alpha-1 subunit (TC 1.A.1.11) family. CACNA1S subfamily. In terms of assembly, component of a calcium channel complex consisting of a pore-forming alpha subunit (CACNA1S) and the ancillary subunits CACNB1 or CACNB2, CACNG1 and CACNA2D1. The channel complex contains alpha, beta, gamma and delta subunits in a 1:1:1:1 ratio, i.e. it contains either CACNB1 or CACNB2. CACNA1S channel activity is modulated by the auxiliary subunits (CACNB1 or CACNB2, CACNG1 and CACNA2D1). Interacts with DYSF and JSRP1. Interacts with RYR1. Interacts with STAC, STAC2 and STAC3 (via their SH3 domains). Interacts with CALM. The alpha-1S subunit is found in two isoforms in the skeletal muscle: a minor form of 212 kDa containing the complete amino acid sequence, and a major form of 190 kDa derived from the full-length form by post-translational proteolysis close to Phe-1690. Post-translationally, phosphorylated. Phosphorylation by PKA activates the calcium channel. Both the minor and major forms are phosphorylated in vitro by PKA. Phosphorylation at Ser-1575 is involved in beta-adrenergic-mediated regulation of the channel. In terms of tissue distribution, skeletal muscle specific.

It localises to the cell membrane. The protein localises to the sarcolemma. Its subcellular location is the T-tubule. The catalysed reaction is Ca(2+)(in) = Ca(2+)(out). Its activity is regulated as follows. Channel activity is blocked by dihydropyridines (DHP), phenylalkylamines, and by benzothiazepines. Functionally, pore-forming, alpha-1S subunit of the voltage-gated calcium channel that gives rise to L-type calcium currents in skeletal muscle. Calcium channels containing the alpha-1S subunit play an important role in excitation-contraction coupling in skeletal muscle via their interaction with RYR1, which triggers Ca(2+) release from the sarcplasmic reticulum and ultimately results in muscle contraction. Long-lasting (L-type) calcium channels belong to the 'high-voltage activated' (HVA) group. In Rattus norvegicus (Rat), this protein is Voltage-dependent L-type calcium channel subunit alpha-1S (Cacna1s).